Reading from the N-terminus, the 329-residue chain is DNA-directed RNA polymerase subunit alpha (329 aa).

The tract at residues 1–234 (MQGSVTEFLK…EQLDAFVELR (234 aa)) is alpha N-terminal domain (alpha-NTD). The alpha C-terminal domain (alpha-CTD) stretch occupies residues 248–329 (FDPILLRPVD…WPPASLIDND (82 aa)).

It belongs to the RNA polymerase alpha chain family. As to quaternary structure, homodimer. The RNAP catalytic core consists of 2 alpha, 1 beta, 1 beta' and 1 omega subunit. When a sigma factor is associated with the core the holoenzyme is formed, which can initiate transcription.

It carries out the reaction RNA(n) + a ribonucleoside 5'-triphosphate = RNA(n+1) + diphosphate. Its function is as follows. DNA-dependent RNA polymerase catalyzes the transcription of DNA into RNA using the four ribonucleoside triphosphates as substrates. The sequence is that of DNA-directed RNA polymerase subunit alpha from Idiomarina loihiensis (strain ATCC BAA-735 / DSM 15497 / L2-TR).